The chain runs to 76 residues: Alpha/kappa-conotoxin-like fe14.1 (76 aa).

An N-terminal signal peptide occupies residues 1-24 (MPSVRSVTCCCLLWMMLSVQLVTP). Positions 25 to 39 (GSPGTAQLSGHRTAR) are excised as a propeptide. Intrachain disulfides connect Cys46–Cys61 and Cys50–Cys63. Arg64 carries the arginine amide modification. Residues 65 to 76 (GKRDVVSSSMAV) constitute a propeptide that is removed on maturation.

It belongs to the conotoxin J superfamily. As to expression, expressed by the venom duct.

Its subcellular location is the secreted. Its function is as follows. Highly inhibits both nicotinic acetylcholine receptors (neuronal (alpha-3/beta-4) and muscular (alpha-1/beta-1/epsilon/delta) subtypes) and the voltage-gated potassium channel Kv1.6/KCNA6 subtype. This chain is Alpha/kappa-conotoxin-like fe14.1, found in Conus ferrugineus (Cone snail).